A 207-amino-acid polypeptide reads, in one-letter code: Outer-membrane lipoprotein carrier protein (207 aa).

An N-terminal signal peptide occupies residues 1 to 21 (MRAIRMLLVSALTLGSVTAYA).

Belongs to the LolA family. Monomer.

It localises to the periplasm. Its function is as follows. Participates in the translocation of lipoproteins from the inner membrane to the outer membrane. Only forms a complex with a lipoprotein if the residue after the N-terminal Cys is not an aspartate (The Asp acts as a targeting signal to indicate that the lipoprotein should stay in the inner membrane). The sequence is that of Outer-membrane lipoprotein carrier protein from Pseudomonas putida (strain ATCC 47054 / DSM 6125 / CFBP 8728 / NCIMB 11950 / KT2440).